The sequence spans 136 residues: Putative pre-16S rRNA nuclease (136 aa).

The protein belongs to the YqgF nuclease family.

The protein localises to the cytoplasm. Could be a nuclease involved in processing of the 5'-end of pre-16S rRNA. The protein is Putative pre-16S rRNA nuclease of Francisella tularensis subsp. mediasiatica (strain FSC147).